Consider the following 302-residue polypeptide: Sulfate adenylyltransferase subunit 2 (302 aa).

The protein belongs to the PAPS reductase family. CysD subfamily. In terms of assembly, heterodimer composed of CysD, the smaller subunit, and CysN.

It catalyses the reaction sulfate + ATP + H(+) = adenosine 5'-phosphosulfate + diphosphate. It functions in the pathway sulfur metabolism; hydrogen sulfide biosynthesis; sulfite from sulfate: step 1/3. Its function is as follows. With CysN forms the ATP sulfurylase (ATPS) that catalyzes the adenylation of sulfate producing adenosine 5'-phosphosulfate (APS) and diphosphate, the first enzymatic step in sulfur assimilation pathway. APS synthesis involves the formation of a high-energy phosphoric-sulfuric acid anhydride bond driven by GTP hydrolysis by CysN coupled to ATP hydrolysis by CysD. This is Sulfate adenylyltransferase subunit 2 from Escherichia coli O81 (strain ED1a).